A 273-amino-acid chain; its full sequence is Patr class II histocompatibility antigen, DO beta chain (273 aa).

Positions 1-26 (MGSGWVPWVVALLVNLTRLDSSMTQG) are cleaved as a signal peptide. The segment at 27–120 (TDSPEDFVIQ…LGAPFTVGRK (94 aa)) is beta-1. Residues 27-224 (TDSPEDFVIQ…RAQSEYSWKK (198 aa)) are Extracellular-facing. 2 disulfide bridges follow: Cys41/Cys105 and Cys143/Cys199. Residue Asn45 is glycosylated (N-linked (GlcNAc...) asparagine). The tract at residues 121–214 (VQPEVTVYPE…SLLSPVSVEW (94 aa)) is beta-2. The 91-residue stretch at 123 to 213 (PEVTVYPERT…SSLLSPVSVE (91 aa)) folds into the Ig-like C1-type domain. The tract at residues 215–224 (RAQSEYSWKK) is connecting peptide. The helical transmembrane segment at 225-245 (MLSGIAAFLLGLIFLLVGIVI) threads the bilayer. At 246–273 (QLRAQKGYVRTQMSGNEVSRAVLLPQSC) the chain is on the cytoplasmic side.

It belongs to the MHC class II family. Heterodimer of an alpha chain (DOA) and a beta chain (DOB). Forms a heterotetrameric complex with an HLA-DM molecule during intracellular transport in endosomal/lysosomal compartments in B-cells.

The protein resides in the endosome membrane. It localises to the lysosome membrane. Its function is as follows. Important modulator in the HLA class II restricted antigen presentation pathway by interaction with the HLA-DM molecule in B-cells. Modifies peptide exchange activity of HLA-DM. The chain is Patr class II histocompatibility antigen, DO beta chain (Patr-DOB) from Pan troglodytes (Chimpanzee).